A 98-amino-acid chain; its full sequence is NADH-ubiquinone oxidoreductase chain 4L (98 aa).

The next 3 membrane-spanning stretches (helical) occupy residues 1 to 21 (MSLV…GLLM), 29 to 49 (SLLC…LTIL), and 61 to 81 (IILL…LVMV).

This sequence belongs to the complex I subunit 4L family. In terms of assembly, core subunit of respiratory chain NADH dehydrogenase (Complex I) which is composed of 45 different subunits.

It localises to the mitochondrion inner membrane. It carries out the reaction a ubiquinone + NADH + 5 H(+)(in) = a ubiquinol + NAD(+) + 4 H(+)(out). Functionally, core subunit of the mitochondrial membrane respiratory chain NADH dehydrogenase (Complex I) which catalyzes electron transfer from NADH through the respiratory chain, using ubiquinone as an electron acceptor. Part of the enzyme membrane arm which is embedded in the lipid bilayer and involved in proton translocation. This Elaphodus cephalophus (Tufted deer) protein is NADH-ubiquinone oxidoreductase chain 4L (MT-ND4L).